We begin with the raw amino-acid sequence, 86 residues long: Putative defensin-like protein 211 (86 aa).

The N-terminal stretch at 1–19 (MNTIVLFLTLLILVSSCTS) is a signal peptide. 3 disulfides stabilise this stretch: Cys-55–Cys-72, Cys-58–Cys-77, and Cys-62–Cys-79.

Belongs to the DEFL family.

The protein localises to the secreted. This Arabidopsis thaliana (Mouse-ear cress) protein is Putative defensin-like protein 211.